The following is a 995-amino-acid chain: Polynucleotide 5'-hydroxyl-kinase NOL9 (995 aa).

2 disordered regions span residues 18–173 (EQRE…SSMK) and 271–359 (IKVF…YEPP). Low complexity-rich tracts occupy residues 75 to 94 (TAGA…SSPS) and 110 to 129 (VNKS…KSAK). A compositionally biased stretch (acidic residues) spans 279–354 (EETDSDEDDI…DIFDTDDLDS (76 aa)). 639–646 (GGKGVGKS) provides a ligand contact to ATP.

This sequence belongs to the Clp1 family. NOL9/GRC3 subfamily.

It localises to the nucleus. Its subcellular location is the nucleolus. Functionally, polynucleotide 5'-kinase involved in rRNA processing. The chain is Polynucleotide 5'-hydroxyl-kinase NOL9 from Drosophila melanogaster (Fruit fly).